Reading from the N-terminus, the 124-residue chain is Small ribosomal subunit protein uS12 (124 aa).

Asp89 bears the 3-methylthioaspartic acid mark.

This sequence belongs to the universal ribosomal protein uS12 family. As to quaternary structure, part of the 30S ribosomal subunit. Contacts proteins S8 and S17. May interact with IF1 in the 30S initiation complex.

Functionally, with S4 and S5 plays an important role in translational accuracy. Interacts with and stabilizes bases of the 16S rRNA that are involved in tRNA selection in the A site and with the mRNA backbone. Located at the interface of the 30S and 50S subunits, it traverses the body of the 30S subunit contacting proteins on the other side and probably holding the rRNA structure together. The combined cluster of proteins S8, S12 and S17 appears to hold together the shoulder and platform of the 30S subunit. This chain is Small ribosomal subunit protein uS12, found in Acinetobacter baumannii (strain AB307-0294).